Reading from the N-terminus, the 458-residue chain is tRNA modification GTPase MnmE (458 aa).

Residues Arg-22, Glu-85, and Arg-124 each coordinate (6S)-5-formyl-5,6,7,8-tetrahydrofolate. Positions 220 to 379 constitute a TrmE-type G domain; the sequence is GIKTVIVGRP…LEEHISELVF (160 aa). Position 230 (Asn-230) interacts with K(+). GTP-binding positions include 230 to 235, 249 to 255, and 274 to 277; these read NVGKSS, TEIPGTT, and DTAG. Ser-234 lines the Mg(2+) pocket. K(+) is bound by residues Thr-249, Ile-251, and Thr-254. Thr-255 is a binding site for Mg(2+). Lys-458 contributes to the (6S)-5-formyl-5,6,7,8-tetrahydrofolate binding site.

It belongs to the TRAFAC class TrmE-Era-EngA-EngB-Septin-like GTPase superfamily. TrmE GTPase family. In terms of assembly, homodimer. Heterotetramer of two MnmE and two MnmG subunits. K(+) is required as a cofactor.

Its subcellular location is the cytoplasm. In terms of biological role, exhibits a very high intrinsic GTPase hydrolysis rate. Involved in the addition of a carboxymethylaminomethyl (cmnm) group at the wobble position (U34) of certain tRNAs, forming tRNA-cmnm(5)s(2)U34. The protein is tRNA modification GTPase MnmE of Natranaerobius thermophilus (strain ATCC BAA-1301 / DSM 18059 / JW/NM-WN-LF).